The primary structure comprises 674 residues: Putative kinase-like protein TMKL1 (674 aa).

An N-terminal signal peptide occupies residues 1–25 (MGMEALRFLHVIFFFVLILHCHCGT). Over 26 to 295 (SLSGSSDVKL…PLKPCLGSSR (270 aa)) the chain is Extracellular. Residues Asn-57, Asn-90, Asn-95, and Asn-110 are each glycosylated (N-linked (GlcNAc...) asparagine). LRR repeat units lie at residues 100 to 122 (HLLSLQLPSANLTGSLPREIGEF), 124 to 146 (MLQSVFLNINSLSGSIPLELGYT), 148 to 169 (SLSDVDLSGNALAGVLPPSIWN), and 173 to 194 (KLVSFKIHGNNLSGVLPEPALP). Asn-183 and Asn-195 each carry an N-linked (GlcNAc...) asparagine glycan. LRR repeat units follow at residues 200–222 (NLQVLDLGGNKFSGEFPEFITRF), 224–244 (GVKSLDLSSNVFEGLVPEGLG), and 247–269 (ELESLNLSHNNFSGMLPDFGESK). N-linked (GlcNAc...) asparagine glycosylation is found at Asn-252 and Asn-257. The helical transmembrane segment at 296–323 (LSPGAVAGLVIGLMSGAVVVASLLIGYL) threads the bilayer. The Cytoplasmic segment spans residues 324 to 674 (QNKKRKSSIE…ETRSDAETPF (351 aa)). The interval 331–350 (SIESEDDLEEGDEEDEIGEK) is disordered. A compositionally biased stretch (acidic residues) spans 333-348 (ESEDDLEEGDEEDEIG). A Phosphoserine modification is found at Ser-334. A Protein kinase domain is found at 373–674 (NATGQVMEKT…ETRSDAETPF (302 aa)). Position 375 is a phosphothreonine (Thr-375). Ser-454 carries the post-translational modification Phosphoserine. The disordered stretch occupies residues 649-674 (LEENRPRNRSALYSPTETRSDAETPF).

Belongs to the protein kinase superfamily.

The protein resides in the membrane. Functionally, does not seem to have conserved a kinase activity. This is Putative kinase-like protein TMKL1 (TMKL1) from Arabidopsis thaliana (Mouse-ear cress).